Here is a 739-residue protein sequence, read N- to C-terminus: DNA ligase (739 aa).

Positions 1 to 29 are disordered; that stretch reads MTANRPALPTRDKAVSDLSATEASDEHAA. Residues 51–55, 100–101, and Glu-134 each bind NAD(+); these read DADYD and SL. Residue Lys-136 is the N6-AMP-lysine intermediate of the active site. The NAD(+) site is built by Arg-157, Glu-194, Lys-311, and Lys-335. Residues Cys-440, Cys-443, Cys-464, and Cys-470 each contribute to the Zn(2+) site. The interval 592 to 612 is disordered; sequence PTEMEEASEETPPTRRRKPQG. Residues 662-739 enclose the BRCT domain; it reads ASTSPVSGKT…TEDEWFDLVG (78 aa).

Belongs to the NAD-dependent DNA ligase family. LigA subfamily. Requires Mg(2+) as cofactor. It depends on Mn(2+) as a cofactor.

The enzyme catalyses NAD(+) + (deoxyribonucleotide)n-3'-hydroxyl + 5'-phospho-(deoxyribonucleotide)m = (deoxyribonucleotide)n+m + AMP + beta-nicotinamide D-nucleotide.. Its function is as follows. DNA ligase that catalyzes the formation of phosphodiester linkages between 5'-phosphoryl and 3'-hydroxyl groups in double-stranded DNA using NAD as a coenzyme and as the energy source for the reaction. It is essential for DNA replication and repair of damaged DNA. In Azorhizobium caulinodans (strain ATCC 43989 / DSM 5975 / JCM 20966 / LMG 6465 / NBRC 14845 / NCIMB 13405 / ORS 571), this protein is DNA ligase.